Reading from the N-terminus, the 289-residue chain is ATP synthase gamma chain (289 aa).

Belongs to the ATPase gamma chain family. In terms of assembly, F-type ATPases have 2 components, CF(1) - the catalytic core - and CF(0) - the membrane proton channel. CF(1) has five subunits: alpha(3), beta(3), gamma(1), delta(1), epsilon(1). CF(0) has three main subunits: a, b and c.

It localises to the cell inner membrane. Its function is as follows. Produces ATP from ADP in the presence of a proton gradient across the membrane. The gamma chain is believed to be important in regulating ATPase activity and the flow of protons through the CF(0) complex. In Halorhodospira halophila (strain DSM 244 / SL1) (Ectothiorhodospira halophila (strain DSM 244 / SL1)), this protein is ATP synthase gamma chain.